Here is a 463-residue protein sequence, read N- to C-terminus: Putative pentatricopeptide repeat-containing protein At4g17915 (463 aa).

12 PPR repeats span residues 12 to 46 (STRL…GVDP), 47 to 81 (DVVT…GIRP), 82 to 116 (DVAT…GIYP), 117 to 152 (DLWS…GLNP), 153 to 186 (GPDT…RFKP), 187 to 221 (ELMT…GYTP), 222 to 256 (NAVT…GYTY), 257 to 291 (DGYA…GRRH), 292 to 326 (DIVS…GMKA), 327 to 361 (DEYT…GIGL), 362 to 392 (NLVT…MEVK), and 393 to 427 (DEYT…GIKI).

This sequence belongs to the PPR family. P subfamily.

This Arabidopsis thaliana (Mouse-ear cress) protein is Putative pentatricopeptide repeat-containing protein At4g17915.